Reading from the N-terminus, the 341-residue chain is Putative UPF0607 protein FLJ37424 (341 aa).

2 disordered regions span residues 72-131 and 216-283; these read PKTE…NPRP and GLLM…LPCL. Residues 79–101 show a composition bias toward basic and acidic residues; that stretch reads EEPKEATEVKDQVETQGQEDNKR. Positions 108 to 127 are enriched in polar residues; that stretch reads EAASTSRPLETQGNLTSSWY. A compositionally biased stretch (basic residues) spans 243 to 252; it reads AGHRSHKRKL.

This sequence belongs to the UPF0607 family.

This Homo sapiens (Human) protein is Putative UPF0607 protein FLJ37424.